A 506-amino-acid polypeptide reads, in one-letter code: EPTC-inducible aldehyde dehydrogenase (506 aa).

219-225 (GFGVEAG) is an NAD(+) binding site. Residues Glu-263 and Cys-302 contribute to the active site.

It belongs to the aldehyde dehydrogenase family.

The enzyme catalyses an aldehyde + NAD(+) + H2O = a carboxylate + NADH + 2 H(+). Its function is as follows. Degrades all aldehydes potentially generated by N dealkylation of thiocarbamates and may also participate in ethanolamine metabolism and further assimilation of degradation products by thiocarbamate-induced cytochrome P-450. This is EPTC-inducible aldehyde dehydrogenase (thcA) from Rhodococcus erythropolis (Arthrobacter picolinophilus).